Reading from the N-terminus, the 87-residue chain is U18-myrmicitoxin-Mri1a (87 aa).

Residues 1–32 (MKNNYNRINTFIVYLMVTFSLISIISITECTP) form the signal peptide. Residues 33–77 (NHDPCPPQYAEALCLNGGTCFSVTIMGSDNYNCICAPGFRGWRCQ) enclose the EGF-like domain. Disulfide bonds link C37/C52, C46/C65, and C67/C76.

Post-translationally, O-glycosylated. As to expression, expressed by the venom gland.

The protein localises to the secreted. The sequence is that of U18-myrmicitoxin-Mri1a from Manica rubida (European giant red ant).